We begin with the raw amino-acid sequence, 599 residues long: Elongation factor 4 (599 aa).

The tr-type G domain maps to 4–186 (KYIRNFSIIA…AIVEKVPPPK (183 aa)). GTP is bound by residues 16–21 (DHGKST) and 133–136 (NKID).

It belongs to the TRAFAC class translation factor GTPase superfamily. Classic translation factor GTPase family. LepA subfamily.

Its subcellular location is the cell inner membrane. The catalysed reaction is GTP + H2O = GDP + phosphate + H(+). Functionally, required for accurate and efficient protein synthesis under certain stress conditions. May act as a fidelity factor of the translation reaction, by catalyzing a one-codon backward translocation of tRNAs on improperly translocated ribosomes. Back-translocation proceeds from a post-translocation (POST) complex to a pre-translocation (PRE) complex, thus giving elongation factor G a second chance to translocate the tRNAs correctly. Binds to ribosomes in a GTP-dependent manner. This chain is Elongation factor 4, found in Bdellovibrio bacteriovorus (strain ATCC 15356 / DSM 50701 / NCIMB 9529 / HD100).